The chain runs to 257 residues: MSGFDNLNSGFYQTSYSIDEQSQQSYDYGGSGGPYSKQYAGCEYSQQGRFVPPDMMQPQQTYTGQIYQPTQAYPPPTPQTFYGDSFEEEPPLLEELGINFDHIWQKTLTVLHPLRASDGSIMNETDLAGPVVFCLAFGATLLLAGKIQFGYVYGISAIGCLGMFCLLNLMSMTGVSFGCVASVLGYCLLPMILLSSFAVVFSLQGMVGILLTATIIGWCSFSASKIFISALAMDGQQLLVAYPCALLYGVFALISVF.

Topologically, residues M1–E124 are cytoplasmic. Residues P75–K106 are interaction with Sec23. A helical membrane pass occupies residues T125 to G145. Position 146 (K146) is a topological domain, lumenal. A helical membrane pass occupies residues I147–L167. Residues N168–T173 are Cytoplasmic-facing. A helical membrane pass occupies residues G174–L194. At S195 to S196 the chain is on the lumenal side. Residues F197–G217 traverse the membrane as a helical segment. Over W218–Q236 the chain is Cytoplasmic. Residues Q237 to F257 form a helical membrane-spanning segment.

Belongs to the YIP1 family. In terms of assembly, interacts with the COPII coat components Sec23 (SEC23A and/or SEC23B) and Sec24 (SEC24A and/or SEC24B). Interacts with YIF1A. May interact with RAB1A. Interacts with YIPF3 and YIPF4.

Its subcellular location is the endoplasmic reticulum membrane. The protein localises to the golgi apparatus. The protein resides in the cis-Golgi network membrane. It localises to the cytoplasmic vesicle. It is found in the COPII-coated vesicle. Its function is as follows. Plays a role in transport between endoplasmic reticulum and Golgi. In pancreatic beta cells, required to transport proinsulin from endoplasmic reticulum into the Golgi. The sequence is that of Protein YIPF5 from Rattus norvegicus (Rat).